The following is a 231-amino-acid chain: Flagellar L-ring protein (231 aa).

A signal peptide spans 1–18; the sequence is MKHLLSVFALGGAVLLAG. Residue Cys19 is the site of N-palmitoyl cysteine attachment. A lipid anchor (S-diacylglycerol cysteine) is attached at Cys19.

It belongs to the FlgH family. As to quaternary structure, the basal body constitutes a major portion of the flagellar organelle and consists of four rings (L,P,S, and M) mounted on a central rod.

Its subcellular location is the cell outer membrane. The protein resides in the bacterial flagellum basal body. Assembles around the rod to form the L-ring and probably protects the motor/basal body from shearing forces during rotation. In Pseudomonas entomophila (strain L48), this protein is Flagellar L-ring protein.